Consider the following 333-residue polypeptide: Anthranilate phosphoribosyltransferase (333 aa).

5-phospho-alpha-D-ribose 1-diphosphate contacts are provided by residues glycine 80, 83–84 (GD), serine 88, 90–93 (NIST), 108–116 (KHGNRSVSS), and serine 120. Anthranilate is bound at residue glycine 80. Serine 92 lines the Mg(2+) pocket. Position 111 (asparagine 111) interacts with anthranilate. Arginine 166 provides a ligand contact to anthranilate. Positions 224 and 225 each coordinate Mg(2+).

It belongs to the anthranilate phosphoribosyltransferase family. In terms of assembly, homodimer. Mg(2+) is required as a cofactor.

It catalyses the reaction N-(5-phospho-beta-D-ribosyl)anthranilate + diphosphate = 5-phospho-alpha-D-ribose 1-diphosphate + anthranilate. It participates in amino-acid biosynthesis; L-tryptophan biosynthesis; L-tryptophan from chorismate: step 2/5. Catalyzes the transfer of the phosphoribosyl group of 5-phosphorylribose-1-pyrophosphate (PRPP) to anthranilate to yield N-(5'-phosphoribosyl)-anthranilate (PRA). The sequence is that of Anthranilate phosphoribosyltransferase from Yersinia pseudotuberculosis serotype O:1b (strain IP 31758).